A 259-amino-acid chain; its full sequence is Ribonuclease PH (259 aa).

Phosphate contacts are provided by residues Arg-88 and 126-128; that span reads GTR.

It belongs to the RNase PH family. In terms of assembly, homohexameric ring arranged as a trimer of dimers.

It catalyses the reaction tRNA(n+1) + phosphate = tRNA(n) + a ribonucleoside 5'-diphosphate. Its function is as follows. Phosphorolytic 3'-5' exoribonuclease that plays an important role in tRNA 3'-end maturation. Removes nucleotide residues following the 3'-CCA terminus of tRNAs; can also add nucleotides to the ends of RNA molecules by using nucleoside diphosphates as substrates, but this may not be physiologically important. Probably plays a role in initiation of 16S rRNA degradation (leading to ribosome degradation) during starvation. The chain is Ribonuclease PH from Mycolicibacterium smegmatis (strain ATCC 700084 / mc(2)155) (Mycobacterium smegmatis).